A 152-amino-acid polypeptide reads, in one-letter code: Isoquinoline 1-oxidoreductase subunit alpha (152 aa).

Residues 1 to 77 (MIEFILNGQP…RQSVTTIEGL (77 aa)) enclose the 2Fe-2S ferredoxin-type domain. Residues Cys-39, Cys-44, and Cys-47 each coordinate [2Fe-2S] cluster.

In terms of assembly, heterodimer of an alpha chain and a beta chain.

The enzyme catalyses isoquinoline + A + H2O = isoquinolin-1(2H)-one + AH2. Specific towards N-containing N-heterocyclic substrates, including isoquinoline, isoquinolin-5-ol, phthalazine and quinazoline. The protein is Isoquinoline 1-oxidoreductase subunit alpha (iorA) of Brevundimonas diminuta (Pseudomonas diminuta).